The following is a 225-amino-acid chain: Ribonuclease 3 (225 aa).

Residues 7-129 enclose the RNase III domain; that stretch reads IPRLCRTLGY…IIGAIYLDSE (123 aa). Glu42 is a Mg(2+) binding site. Asp46 is an active-site residue. Residues Asp115 and Glu118 each contribute to the Mg(2+) site. Glu118 is a catalytic residue. The DRBM domain occupies 155–225; sequence DPKTLLQEHL…AAQVLELMKK (71 aa).

It belongs to the ribonuclease III family. Homodimer. The cofactor is Mg(2+).

The protein resides in the cytoplasm. The enzyme catalyses Endonucleolytic cleavage to 5'-phosphomonoester.. Functionally, digests double-stranded RNA. Involved in the processing of primary rRNA transcript to yield the immediate precursors to the large and small rRNAs (23S and 16S). Processes some mRNAs, and tRNAs when they are encoded in the rRNA operon. Processes pre-crRNA and tracrRNA of type II CRISPR loci if present in the organism. In Shewanella halifaxensis (strain HAW-EB4), this protein is Ribonuclease 3.